The chain runs to 224 residues: 7-cyano-7-deazaguanine synthase (224 aa).

9-19 (LSGGLDSATVL) is a binding site for ATP. Zn(2+)-binding residues include cysteine 189, cysteine 199, cysteine 202, and cysteine 205.

Belongs to the QueC family. The cofactor is Zn(2+).

The catalysed reaction is 7-carboxy-7-deazaguanine + NH4(+) + ATP = 7-cyano-7-deazaguanine + ADP + phosphate + H2O + H(+). It functions in the pathway purine metabolism; 7-cyano-7-deazaguanine biosynthesis. Catalyzes the ATP-dependent conversion of 7-carboxy-7-deazaguanine (CDG) to 7-cyano-7-deazaguanine (preQ(0)). The chain is 7-cyano-7-deazaguanine synthase from Ralstonia nicotianae (strain ATCC BAA-1114 / GMI1000) (Ralstonia solanacearum).